The following is a 494-amino-acid chain: Catalase (494 aa).

Residues H65 and N138 contribute to the active site. Heme is bound at residue Y348.

Belongs to the catalase family. As to quaternary structure, homotetramer. Heme serves as cofactor.

The protein localises to the cytoplasm. It is found in the cytosol. The protein resides in the peroxisome matrix. The catalysed reaction is 2 H2O2 = O2 + 2 H2O. Its function is as follows. Catalyzes the degradation of hydrogen peroxide (H(2)O(2)) generated by peroxisomal oxidases to water and oxygen, thereby protecting cells from the toxic effects of hydrogen peroxide. The chain is Catalase from Pisum sativum (Garden pea).